We begin with the raw amino-acid sequence, 380 residues long: All-trans-retinol dehydrogenase [NAD(+)] ADH4 (380 aa).

Residue C47 participates in Zn(2+) binding. 48–49 is an NAD(+) binding site; the sequence is HT. Positions 69, 99, 102, 105, and 113 each coordinate Zn(2+). S121 is subject to Phosphoserine. A Zn(2+)-binding site is contributed by C180. NAD(+) contacts are provided by residues 205–210, D229, and K234; that span reads GLGGVG. Position 278 is a phosphoserine (S278). Residues 298 to 300, 323 to 325, and R375 contribute to the NAD(+) site; these read IGV and TFF.

This sequence belongs to the zinc-containing alcohol dehydrogenase family. Class-II subfamily. In terms of assembly, homodimer. Requires Zn(2+) as cofactor.

It is found in the cytoplasm. The catalysed reaction is all-trans-retinol + NAD(+) = all-trans-retinal + NADH + H(+). The enzyme catalyses 9-cis-retinol + NAD(+) = 9-cis-retinal + NADH + H(+). It catalyses the reaction 20-oxo-(5Z,8Z,11Z,14Z)-eicosatetraenoate + NAD(+) + H2O = (5Z,8Z,11Z,14Z)-eicosatetraenedioate + NADH + 2 H(+). It carries out the reaction 20-hydroxy-(5Z,8Z,11Z,14Z)-eicosatetraenoate + NAD(+) = 20-oxo-(5Z,8Z,11Z,14Z)-eicosatetraenoate + NADH + H(+). The catalysed reaction is 1,4-benzoquinone + NADH + H(+) = hydroquinone + NAD(+). Oxydation of 20-HETE is inhibited by low concentrations of N-heptylformamide. Oxydation of 20-HETE is a decreased by 55-65% by either all-trans-retinol or all-trans-retinoic acid. Strongly inhibited by omega-hydroxy fatty acids. Its function is as follows. Catalyzes the NAD-dependent oxidation of either all-trans-retinol or 9-cis-retinol. Also oxidizes long chain omega-hydroxy fatty acids, such as 20-HETE, producing both the intermediate aldehyde, 20-oxoarachidonate and the end product, a dicarboxylic acid, (5Z,8Z,11Z,14Z)-eicosatetraenedioate. Also catalyzes the reduction of benzoquinones. In Homo sapiens (Human), this protein is All-trans-retinol dehydrogenase [NAD(+)] ADH4.